We begin with the raw amino-acid sequence, 476 residues long: Arginine biosynthesis bifunctional protein ArgJ, mitochondrial (476 aa).

The substrate site is built by threonine 193, lysine 219, threonine 237, glutamate 337, asparagine 471, and serine 476. Catalysis depends on threonine 237, which acts as the Nucleophile.

It belongs to the ArgJ family. As to quaternary structure, heterodimer of an alpha and a beta chain. In terms of processing, the alpha and beta chains are autoproteolytically processed from a single precursor protein within the mitochondrion.

It is found in the mitochondrion matrix. The catalysed reaction is N(2)-acetyl-L-ornithine + L-glutamate = N-acetyl-L-glutamate + L-ornithine. It carries out the reaction L-glutamate + acetyl-CoA = N-acetyl-L-glutamate + CoA + H(+). Its pathway is amino-acid biosynthesis; L-arginine biosynthesis; L-ornithine and N-acetyl-L-glutamate from L-glutamate and N(2)-acetyl-L-ornithine (cyclic): step 1/1. The protein operates within amino-acid biosynthesis; L-arginine biosynthesis; N(2)-acetyl-L-ornithine from L-glutamate: step 1/4. Its function is as follows. Catalyzes two activities which are involved in the cyclic version of arginine biosynthesis: the synthesis of acetylglutamate from glutamate and acetyl-CoA, and of ornithine by transacetylation between acetylornithine and glutamate. This Cryptococcus neoformans var. neoformans serotype D (strain JEC21 / ATCC MYA-565) (Filobasidiella neoformans) protein is Arginine biosynthesis bifunctional protein ArgJ, mitochondrial.